A 307-amino-acid chain; its full sequence is Porphobilinogen deaminase (307 aa).

Cysteine 239 carries the post-translational modification S-(dipyrrolylmethanemethyl)cysteine.

The protein belongs to the HMBS family. In terms of assembly, monomer. The cofactor is dipyrromethane.

It carries out the reaction 4 porphobilinogen + H2O = hydroxymethylbilane + 4 NH4(+). The protein operates within porphyrin-containing compound metabolism; protoporphyrin-IX biosynthesis; coproporphyrinogen-III from 5-aminolevulinate: step 2/4. In terms of biological role, tetrapolymerization of the monopyrrole PBG into the hydroxymethylbilane pre-uroporphyrinogen in several discrete steps. This Campylobacter jejuni subsp. doylei (strain ATCC BAA-1458 / RM4099 / 269.97) protein is Porphobilinogen deaminase.